Consider the following 289-residue polypeptide: uncharacterized protein (289 aa).

In terms of domain architecture, HTH tetR-type spans 2-62 (NEKKERIIKT…SACEYYIGMS (61 aa)). Positions 25–44 (TIQEIASECGISKGAFYLHF) form a DNA-binding region, H-T-H motif.

This is an uncharacterized protein from Bacillus subtilis (strain 168).